A 209-amino-acid polypeptide reads, in one-letter code: Large ribosomal subunit protein uL4 (209 aa).

The interval 45-77 is disordered; the sequence is RQGTHKAKERAEVTGSTRKIKKQKGTGTARAGS.

The protein belongs to the universal ribosomal protein uL4 family. As to quaternary structure, part of the 50S ribosomal subunit.

One of the primary rRNA binding proteins, this protein initially binds near the 5'-end of the 23S rRNA. It is important during the early stages of 50S assembly. It makes multiple contacts with different domains of the 23S rRNA in the assembled 50S subunit and ribosome. Its function is as follows. Forms part of the polypeptide exit tunnel. This chain is Large ribosomal subunit protein uL4, found in Flavobacterium johnsoniae (strain ATCC 17061 / DSM 2064 / JCM 8514 / BCRC 14874 / CCUG 350202 / NBRC 14942 / NCIMB 11054 / UW101) (Cytophaga johnsonae).